The chain runs to 182 residues: MGDEEKRNRAITARRQHLKSVMLQIAATELEKEESRRESEKENYLSEHCPPLHIPGSMSEVQELCKQLHAKIDVAEEEKYDMEVKVQKSSKELEDMNQKLFDLRGKFKRPPLRRVRMSADAMLKALLGSKHKVCMDLRANLKQVKKEDTEKERDLRDVGDWRKNIEEKSGMEGRKKMFESES.

G2 bears the N-acetylglycine mark. Positions 2 to 48 are involved in binding TNC; sequence GDEEKRNRAITARRQHLKSVMLQIAATELEKEESRRESEKENYLSEH. T12 carries the phosphothreonine modification. Residues 29-45 are compositionally biased toward basic and acidic residues; that stretch reads ELEKEESRRESEKENYL. A disordered region spans residues 29–53; sequence ELEKEESRRESEKENYLSEHCPPLH. Residues 97-117 form an involved in binding TNC and actin region; the sequence is NQKLFDLRGKFKRPPLRRVRM. S118 is modified (phosphoserine).

The protein belongs to the troponin I family. As to quaternary structure, binds to actin and tropomyosin.

Functionally, troponin I is the inhibitory subunit of troponin, the thin filament regulatory complex which confers calcium-sensitivity to striated muscle actomyosin ATPase activity. This is Troponin I, fast skeletal muscle (Tnni2) from Mus musculus (Mouse).